A 2532-amino-acid chain; its full sequence is Lovastatin diketide synthase lovF (2532 aa).

The Ketosynthase family 3 (KS3) domain occupies 10-430; sequence PAPIAMVGMG…GANAHAIVEQ (421 aa). Active-site for beta-ketoacyl synthase activity residues include cysteine 183, histidine 318, and histidine 353. Positions 545-870 are malonyl-CoA:ACP transacylase (MAT) domain; sequence VFTGQGAQWF…PYLSCLSRGK (326 aa). Residue serine 635 is the For malonyltransferase activity of the active site. The segment at 941–1078 is N-terminal hotdog fold; sequence HDLIGLQEPL…GLVRAEMDQP (138 aa). The interval 941-1246 is dehydratase (DH) domain; that stretch reads HDLIGLQEPL…LEGLVFQSLG (306 aa). The region spanning 941–1251 is the PKS/mFAS DH domain; the sequence is HDLIGLQEPL…FQSLGASLGT (311 aa). Histidine 973 acts as the Proton acceptor; for dehydratase activity in catalysis. The disordered stretch occupies residues 1075–1094; the sequence is MDQPPSSLSNQQRIDPRPWS. Over residues 1078 to 1087 the composition is skewed to polar residues; sequence PPSSLSNQQR. The tract at residues 1092–1251 is C-terminal hotdog fold; that stretch reads PWSRKTAPQE…FQSLGASLGT (160 aa). Aspartate 1159 acts as the Proton donor; for dehydratase activity in catalysis. Positions 1423 to 1607 are methyltransferase (CMet) domain; sequence ELVRLCCHKN…ARDCDSHEFY (185 aa). The segment at 1825-2144 is enoylreductase (ER) domain; that stretch reads GLLDSLHFTK…SGQHVGKIVV (320 aa). Positions 2168–2340 are ketoreductase (KR) domain; it reads SYLVAGGLGG…AVTIDLGMVQ (173 aa). A Carrier domain is found at 2453–2530; sequence ESIAVIMEAM…KVAEVVLQRY (78 aa). The residue at position 2490 (serine 2490) is an O-(pantetheine 4'-phosphoryl)serine.

In terms of assembly, interacts with LovD. It depends on pantetheine 4'-phosphate as a cofactor.

The catalysed reaction is holo-[2-methylbutanoate polyketide synthase] + 2 malonyl-CoA + S-adenosyl-L-methionine + 2 NADPH + 3 H(+) = (S)-2-methylbutanoyl-[2-methylbutanoate polyketide synthase] + S-adenosyl-L-homocysteine + 2 CO2 + 2 NADP(+) + 2 CoA + H2O. It participates in polyketide biosynthesis; lovastatin biosynthesis. Its function is as follows. Lovastatin diketide synthase; part of the gene cluster that mediates the biosynthesis of lovastatin (also known as mevinolin, mevacor or monacolin K), a hypolipidemic inhibitor of (3S)-hydroxymethylglutaryl-coenzyme A (HMG-CoA) reductase (HMGR). The first step in the biosynthesis of lovastatin is the production of dihydromonacolin L acid by the lovastatin nonaketide synthase lovB and the trans-acting enoyl reductase lovC via condensation of one acetyl-CoA unit and 8 malonyl-CoA units. Dihydromonacolin L acid is released from lovB by the thioesterase lovG. Next, dihydromonacolin L acid is oxidized by the dihydromonacolin L monooxygenase lovA twice to form monacolin J acid. The 2-methylbutyrate moiety of lovastatin is synthesized by the lovastatin diketide synthase lovF via condensation of one acetyl-CoA unit and one malonyl-CoA unit. Finally, the covalent attachment of this moiety to monacolin J acid is catalyzed by the transesterase lovD to yield lovastatin. LovD has broad substrate specificity and can also convert monacolin J to simvastatin using alpha-dimethylbutanoyl-S-methyl-3-mercaptopropionate (DMB-S-MMP) as the thioester acyl donor, and can also catalyze the reverse reaction and function as hydrolase in vitro. LovD has much higher activity with LovF-bound 2-methylbutanoate than with free diketide substrates. The sequence is that of Lovastatin diketide synthase lovF from Aspergillus terreus.